The sequence spans 293 residues: Small ribosomal subunit protein uS2 (293 aa).

The segment at 265 to 293 (DGGDWAASSAPAPGGENWAEAQPAEGAKW) is disordered.

The protein belongs to the universal ribosomal protein uS2 family. As to quaternary structure, component of the small ribosomal subunit. Mature ribosomes consist of a small (40S) and a large (60S) subunit. The 40S subunit contains about 33 different proteins and 1 molecule of RNA (18S). The 60S subunit contains about 49 different proteins and 3 molecules of RNA (25S, 5.8S and 5S). Interacts with rps21.

Its subcellular location is the cytoplasm. In terms of biological role, required for the assembly and/or stability of the 40S ribosomal subunit. Required for the processing of the 20S rRNA-precursor to mature 18S rRNA in a late step of the maturation of 40S ribosomal subunits. The protein is Small ribosomal subunit protein uS2 (rps0) of Emericella nidulans (strain FGSC A4 / ATCC 38163 / CBS 112.46 / NRRL 194 / M139) (Aspergillus nidulans).